The sequence spans 598 residues: Serine/threonine-protein kinase cot-1 (598 aa).

3 stretches are compositionally biased toward polar residues: residues M1–T16, T24–P33, and P99–E126. 3 disordered regions span residues M1 to Q46, G80 to K148, and R163 to I190. In terms of domain architecture, Protein kinase spans Y214–F518. ATP contacts are provided by residues I220–V228 and K243. D337 acts as the Proton acceptor in catalysis. The AGC-kinase C-terminal domain occupies R519–R598.

It belongs to the protein kinase superfamily. STE Ser/Thr protein kinase family. COT1 subfamily.

It catalyses the reaction L-seryl-[protein] + ATP = O-phospho-L-seryl-[protein] + ADP + H(+). It carries out the reaction L-threonyl-[protein] + ATP = O-phospho-L-threonyl-[protein] + ADP + H(+). Functionally, protein kinase required for hyphal elongation. The protein is Serine/threonine-protein kinase cot-1 (cot-1) of Neurospora crassa (strain ATCC 24698 / 74-OR23-1A / CBS 708.71 / DSM 1257 / FGSC 987).